Reading from the N-terminus, the 165-residue chain is Nucleotide-binding protein Cagg_1607 (165 aa).

This sequence belongs to the YajQ family.

Its function is as follows. Nucleotide-binding protein. This Chloroflexus aggregans (strain MD-66 / DSM 9485) protein is Nucleotide-binding protein Cagg_1607.